The following is an 85-amino-acid chain: U4-theraphotoxin-Hhn1a (85 aa).

An N-terminal signal peptide occupies residues 1 to 22; that stretch reads MKMTLIAILTCAAVLVLHITAA. Residues 23 to 48 constitute a propeptide that is removed on maturation; the sequence is EELEAESQLMEVGMPDTELEAVDEER. Disulfide bonds link Cys-52–Cys-66, Cys-56–Cys-77, and Cys-71–Cys-82.

Belongs to the neurotoxin 12 (Hwtx-2) family. 02 (Hwtx-2) subfamily. Monomer. As to expression, expressed by the venom gland.

It localises to the secreted. In terms of biological role, neurotoxin active on both insects and mammals. The protein is U4-theraphotoxin-Hhn1a of Cyriopagopus hainanus (Chinese bird spider).